The sequence spans 638 residues: Chaperone protein DnaK (638 aa).

The residue at position 197 (T197) is a Phosphothreonine; by autocatalysis. The segment at 600 to 638 (SGAQGGAQAGPGAGAGQQANQGSSNNKEDIQDADFEEVK) is disordered. Over residues 602-614 (AQGGAQAGPGAGA) the composition is skewed to gly residues. The segment covering 615-624 (GQQANQGSSN) has biased composition (low complexity). A compositionally biased stretch (basic and acidic residues) spans 625-638 (NKEDIQDADFEEVK).

This sequence belongs to the heat shock protein 70 family.

Its function is as follows. Acts as a chaperone. This Phocaeicola vulgatus (strain ATCC 8482 / DSM 1447 / JCM 5826 / CCUG 4940 / NBRC 14291 / NCTC 11154) (Bacteroides vulgatus) protein is Chaperone protein DnaK.